The sequence spans 295 residues: Protease Rv3090 (295 aa).

Transmembrane regions (helical) follow at residues 2 to 22 (TWQIVFVVICVIVAGVAALFW) and 37 to 57 (VTIAAVAAAAVFFFLGCFTIV).

It localises to the cell membrane. It is found in the secreted. The protein localises to the cell wall. In terms of biological role, protease that triggers late cell apoptosis and contributes to the pathogenicity and dissemination of M.tuberculosis. In a mouse model of infection, can induce hepatocyte and lung cell apoptosis and cause pathological damage to the spleen, liver and lungs. Specifically stimulates the secretion of inflammatory cytokines including TNF-alpha, IL-6 and IL-1 beta. Can degrade casein in vitro. This is Protease Rv3090 from Mycobacterium tuberculosis (strain ATCC 25618 / H37Rv).